The primary structure comprises 284 residues: Tropomyosin (284 aa).

The stretch at 1 to 284 (MDAIKKKMLA…DQTFAELAGY (284 aa)) forms a coiled coil. A compositionally biased stretch (polar residues) spans 202 to 213 (NNTKSLEISEQE). Residues 202-223 (NNTKSLEISEQEASQREDSYEE) form a disordered region. Residues 214-223 (ASQREDSYEE) show a composition bias toward basic and acidic residues.

Belongs to the tropomyosin family. Homodimer.

Functionally, tropomyosin, in association with the troponin complex, plays a central role in the calcium dependent regulation of muscle contraction. The sequence is that of Tropomyosin from Haliotis rufescens (California red abalone).